A 392-amino-acid polypeptide reads, in one-letter code: Nucleolysin TIAR (392 aa).

RRM domains follow at residues 9-102 (RTLY…WATT) and 114-192 (FHVF…WATR). N6-acetyllysine is present on Lys-139. Ser-218 is modified (phosphoserine). The 73-residue stretch at 222–294 (CTVYCGGIAS…HVVKCYWGKE (73 aa)) folds into the RRM 3 domain. The segment at 363–392 (GAQPPQGQAPPPVIPPPNQAGYGMASFPTQ) is disordered. The span at 369 to 380 (GQAPPPVIPPPN) shows a compositional bias: pro residues.

In terms of assembly, interacts with FASTK. In terms of processing, phosphorylated by MAPK14 following DNA damage, releasing TIAR from GADD45A mRNA. As to expression, expressed both in primordial germ cells (PGCs) and in neighboring somatic cells.

It localises to the nucleus. The protein resides in the cytoplasm. The protein localises to the stress granule. Its subcellular location is the cytolytic granule. RNA-binding protein involved in alternative pre-RNA splicing and in cytoplasmic stress granules formation. Shows a preference for uridine-rich RNAs. Activates splicing of alternative exons with weak 5' splice sites followed by a U-rich stretch on its own pre-mRNA and on TIA1 mRNA. Promotes the inclusion of TIA1 exon 5 to give rise to the long isoform (isoform a) of TIA1. Acts downstream of the stress-induced phosphorylation of EIF2S1/EIF2A to promote the recruitment of untranslated mRNAs to cytoplasmic stress granules (SG). Possesses nucleolytic activity against cytotoxic lymphocyte target cells. May be involved in apoptosis. This is Nucleolysin TIAR (Tial1) from Mus musculus (Mouse).